The chain runs to 274 residues: Purine nucleoside phosphorylase 1 (274 aa).

Phosphate is bound by residues S29, H60, R80 to H82, and A112. S29 carries the phosphoserine modification. E192 contacts a purine D-ribonucleoside. A phosphate-binding site is contributed by S211. N234 lines the a purine D-ribonucleoside pocket.

It belongs to the PNP/MTAP phosphorylase family. As to quaternary structure, homotrimer.

It carries out the reaction a purine D-ribonucleoside + phosphate = a purine nucleobase + alpha-D-ribose 1-phosphate. The enzyme catalyses a purine 2'-deoxy-D-ribonucleoside + phosphate = a purine nucleobase + 2-deoxy-alpha-D-ribose 1-phosphate. It participates in purine metabolism; purine nucleoside salvage. Functionally, the purine nucleoside phosphorylases catalyze the phosphorolytic breakdown of the N-glycosidic bond in the beta-(deoxy)ribonucleoside molecules, with the formation of the corresponding free purine bases and pentose-1-phosphate. Cleaves guanosine, inosine, 2'-deoxyguanosine and 2'-deoxyinosine. The polypeptide is Purine nucleoside phosphorylase 1 (punA) (Geobacillus stearothermophilus (Bacillus stearothermophilus)).